Here is a 375-residue protein sequence, read N- to C-terminus: Chaperone protein DnaJ (375 aa).

Positions 5-70 (DYYEVLGVAR…NKRRAYDAHG (66 aa)) constitute a J domain. Residues 131–208 (GIERRIEIPT…CHGAGRVEED (78 aa)) form a CR-type zinc finger. Residues cysteine 144, cysteine 147, cysteine 160, cysteine 163, cysteine 182, cysteine 185, cysteine 196, and cysteine 199 each contribute to the Zn(2+) site. CXXCXGXG motif repeat units follow at residues 144-151 (CAPCHGSG), 160-167 (CGTCHGRG), 182-189 (CPHCDGRG), and 196-203 (CKTCHGAG).

It belongs to the DnaJ family. In terms of assembly, homodimer. Zn(2+) serves as cofactor.

Its subcellular location is the cytoplasm. In terms of biological role, participates actively in the response to hyperosmotic and heat shock by preventing the aggregation of stress-denatured proteins and by disaggregating proteins, also in an autonomous, DnaK-independent fashion. Unfolded proteins bind initially to DnaJ; upon interaction with the DnaJ-bound protein, DnaK hydrolyzes its bound ATP, resulting in the formation of a stable complex. GrpE releases ADP from DnaK; ATP binding to DnaK triggers the release of the substrate protein, thus completing the reaction cycle. Several rounds of ATP-dependent interactions between DnaJ, DnaK and GrpE are required for fully efficient folding. Also involved, together with DnaK and GrpE, in the DNA replication of plasmids through activation of initiation proteins. The chain is Chaperone protein DnaJ from Xanthomonas axonopodis pv. citri (strain 306).